Consider the following 208-residue polypeptide: AN1-type zinc finger protein 6 (208 aa).

An A20-type zinc finger spans residues 8–42 (SQVPMLCSTGCGFYGNPRTNGMCSVCYKEHLQRQN). Residues cysteine 14, cysteine 18, cysteine 30, and cysteine 33 each coordinate Zn(2+). A disordered region spans residues 41 to 110 (QNSSNGRISP…ASSQVDSTSV (70 aa)). The residue at position 49 (serine 49) is a Phosphoserine. Positions 54 to 68 (SVTSLSESLPVQCTD) are enriched in polar residues. Over residues 83–94 (SSVQPSPVSNQS) the composition is skewed to low complexity. Positions 95 to 110 (LLSESVASSQVDSTSV) are enriched in polar residues. The AN1-type zinc finger occupies 143–189 (KQKKNRCFMCRKKVGLTGFECRCGNVYCGVHRYSDVHNCSYNYKADA). The Zn(2+) site is built by cysteine 149, cysteine 152, cysteine 163, cysteine 165, cysteine 170, histidine 173, histidine 179, and cysteine 181. At lysine 204 the chain carries N6-acetyllysine.

As to quaternary structure, interacts with PKN1.

The polypeptide is AN1-type zinc finger protein 6 (ZFAND6) (Bos taurus (Bovine)).